The primary structure comprises 140 residues: Auxin-responsive protein IAA26 (140 aa).

The segment at 1–40 is disordered; that stretch reads MASYGDDGVELTELTLGPPGASARRARRGRKNGHPPPSSS. Positions 14–18 match the EAR-like (transcriptional repression) motif; that stretch reads LTLGP. Over residues 24 to 33 the composition is skewed to basic residues; the sequence is RRARRGRKNG. Residues 45 to 130 form the PB1 domain; it reads AYFVKVSMDG…SCKRMRVMRA (86 aa).

Belongs to the Aux/IAA family. As to quaternary structure, homodimers and heterodimers. Expressed in roots, seedlings and flowers.

The protein localises to the nucleus. Its function is as follows. Aux/IAA proteins are short-lived transcriptional factors that function as repressors of early auxin response genes at low auxin concentrations. The chain is Auxin-responsive protein IAA26 (IAA26) from Oryza sativa subsp. japonica (Rice).